We begin with the raw amino-acid sequence, 393 residues long: Pre-mRNA-splicing regulator WTAP (393 aa).

The disordered stretch occupies residues 242–393 (QIQISGNRTP…SSVNVQGSVL (152 aa)). Over residues 254–267 (EPKDEGETSGKDCG) the composition is skewed to basic and acidic residues. Composition is skewed to polar residues over residues 272 to 286 (GPSN…THSS) and 321 to 353 (DGSS…SNDT). Residues 354 to 365 (DSNHDSQEEKPV) are compositionally biased toward basic and acidic residues. Residues 369-393 (GNRTVSSRHLQNGLDSSVNVQGSVL) show a composition bias toward polar residues.

Belongs to the fl(2)d family. As to quaternary structure, component of the WMM complex, a N6-methyltransferase complex composed of a catalytic subcomplex, named MAC, and of an associated subcomplex, named MACOM. Component of the MACOM subcomplex.

The protein localises to the nucleus speckle. It is found in the nucleus. It localises to the nucleoplasm. In terms of biological role, associated component of the WMM complex, a complex that mediates N6-methyladenosine (m6A) methylation of RNAs, a modification that plays a role in the efficiency of mRNA splicing and RNA processing. This chain is Pre-mRNA-splicing regulator WTAP, found in Xenopus laevis (African clawed frog).